The sequence spans 101 residues: Apolipoprotein C-II (101 aa).

An N-terminal signal peptide occupies residues 1 to 22 (MGTRYFLVGFLILLVLGFEVQG). The lipid binding stretch occupies residues 66 to 74 (AVDEKIRDI). Residues 78-101 (STAAVTTYAGIITDQVFSVLSGKD) form a lipoprotein lipase cofactor region.

The protein belongs to the apolipoprotein C2 family. Proapolipoprotein C-II is synthesized as a sialic acid containing glycoprotein which is subsequently desialylated prior to its proteolytic processing. In terms of processing, proapolipoprotein C-II undergoes proteolytic cleavage of its N-terminal hexapeptide to generate apolipoprotein C-II. In bovine, proapolipoprotein C-II was found to be the minor form whereas apolipoprotein C-II was found to be the major form in plasma.

It localises to the secreted. Its function is as follows. Component of chylomicrons, very low-density lipoproteins (VLDL), low-density lipoproteins (LDL), and high-density lipoproteins (HDL) in plasma. Plays an important role in lipoprotein metabolism as an activator of lipoprotein lipase. Both proapolipoprotein C-II and apolipoprotein C-II can activate lipoprotein lipase. The sequence is that of Apolipoprotein C-II (APOC2) from Bos taurus (Bovine).